A 338-amino-acid polypeptide reads, in one-letter code: Uroporphyrinogen decarboxylase (338 aa).

Substrate contacts are provided by residues 21–25 (RQAGR), Asp71, Tyr146, Ser201, and His316.

Belongs to the uroporphyrinogen decarboxylase family. As to quaternary structure, homodimer.

The protein resides in the cytoplasm. It catalyses the reaction uroporphyrinogen III + 4 H(+) = coproporphyrinogen III + 4 CO2. Its pathway is porphyrin-containing compound metabolism; protoporphyrin-IX biosynthesis; coproporphyrinogen-III from 5-aminolevulinate: step 4/4. In terms of biological role, catalyzes the decarboxylation of four acetate groups of uroporphyrinogen-III to yield coproporphyrinogen-III. The polypeptide is Uroporphyrinogen decarboxylase (Rickettsia akari (strain Hartford)).